A 329-amino-acid chain; its full sequence is UDP-2,3-diacylglucosamine pyrophosphatase LpxG (329 aa).

Residues phenylalanine 2 to tryptophan 24 form a helical membrane-spanning segment. A divalent metal cation contacts are provided by aspartate 59, histidine 61, aspartate 91, asparagine 123, histidine 257, and histidine 259.

It belongs to the metallophosphoesterase superfamily. LpxG family. Mn(2+) serves as cofactor.

It is found in the cell inner membrane. The enzyme catalyses UDP-2,3-diacyl-alpha-D-glucosamine + H2O = 2,3-diacyl-alpha-D-glucosaminyl 1-phosphate + UMP + 2 H(+). It functions in the pathway glycolipid biosynthesis; lipid IV(A) biosynthesis. Functionally, hydrolyzes the pyrophosphate bond of UDP-2,3-diacylglucosamine to form 2,3-diacylglucosamine 1-phosphate (lipid X) and UMP by catalyzing the attack of water at the alpha-P atom. Involved in the biosynthesis of lipid A, a phosphorylated glycolipid that anchors the lipooligosaccharide (LOS) to the outer membrane of the cell. Can functionally complement lpxH deficiency in E.coli. Overexpression of LpxG results in toxic accumulation of lipid X and profoundly reduces the infectivity of C.trachomatis. Can utilize UDP-2-N,3-O-bis((3R)-3-hydroxytetradecanoyl)-alpha-D-glucosamine as substrate in vitro, but the substrate is likely UDP-2-N-((3R)-3-hydroxyicosanoyl),3-O-(tetradecanoyl)-alpha-D-glucosamine in vivo. This is UDP-2,3-diacylglucosamine pyrophosphatase LpxG from Chlamydia trachomatis serovar D (strain ATCC VR-885 / DSM 19411 / UW-3/Cx).